We begin with the raw amino-acid sequence, 272 residues long: Formamidopyrimidine-DNA glycosylase (272 aa).

Residue Pro2 is the Schiff-base intermediate with DNA of the active site. Glu3 acts as the Proton donor in catalysis. Lys58 functions as the Proton donor; for beta-elimination activity in the catalytic mechanism. Residues His91, Arg111, and Arg153 each contribute to the DNA site. The FPG-type zinc-finger motif lies at 238–272 (AVYGRANKACVICSKPLKEIRQAQRSTVFCINCQS). Catalysis depends on Arg262, which acts as the Proton donor; for delta-elimination activity.

The protein belongs to the FPG family. In terms of assembly, monomer. It depends on Zn(2+) as a cofactor.

The enzyme catalyses Hydrolysis of DNA containing ring-opened 7-methylguanine residues, releasing 2,6-diamino-4-hydroxy-5-(N-methyl)formamidopyrimidine.. It catalyses the reaction 2'-deoxyribonucleotide-(2'-deoxyribose 5'-phosphate)-2'-deoxyribonucleotide-DNA = a 3'-end 2'-deoxyribonucleotide-(2,3-dehydro-2,3-deoxyribose 5'-phosphate)-DNA + a 5'-end 5'-phospho-2'-deoxyribonucleoside-DNA + H(+). Its function is as follows. Involved in base excision repair of DNA damaged by oxidation or by mutagenic agents. Acts as a DNA glycosylase that recognizes and removes damaged bases. Has a preference for oxidized purines, such as 7,8-dihydro-8-oxoguanine (8-oxoG). Has AP (apurinic/apyrimidinic) lyase activity and introduces nicks in the DNA strand. Cleaves the DNA backbone by beta-delta elimination to generate a single-strand break at the site of the removed base with both 3'- and 5'-phosphates. The sequence is that of Formamidopyrimidine-DNA glycosylase from Marinomonas sp. (strain MWYL1).